The chain runs to 1106 residues: Carbamoyl phosphate synthase large chain (1106 aa).

Residues 1–402 (MPKREDLKSV…ALQKALRSLE (402 aa)) form a carboxyphosphate synthetic domain region. ATP is bound by residues Arg-129, Arg-169, Gly-175, Gly-176, Glu-208, Ile-210, Glu-215, Gly-241, Val-242, His-243, Gln-285, and Glu-299. Residues 133 to 328 (KGVVERCGAE…IAKIATKLSL (196 aa)) enclose the ATP-grasp 1 domain. Residues Gln-285, Glu-299, and Asn-301 each contribute to the Mg(2+) site. Positions 285, 299, and 301 each coordinate Mn(2+). An oligomerization domain region spans residues 403–546 (QKGSQLDFGS…YHYSSYDQED (144 aa)). The tract at residues 547-956 (EIALHEKPSV…AFAKSQAAAN (410 aa)) is carbamoyl phosphate synthetic domain. The region spanning 677–868 (ARVLDIAGLI…LAKAAALIGT (192 aa)) is the ATP-grasp 2 domain. Positions 713, 752, 754, 759, 784, 785, 786, 787, 827, and 839 each coordinate ATP. Mg(2+)-binding residues include Gln-827, Glu-839, and Asn-841. Residues Gln-827, Glu-839, and Asn-841 each contribute to the Mn(2+) site. The region spanning 957–1106 (NALPTEGKVF…EALLEAAANV (150 aa)) is the MGS-like domain. The segment at 957-1106 (NALPTEGKVF…EALLEAAANV (150 aa)) is allosteric domain.

This sequence belongs to the CarB family. In terms of assembly, composed of two chains; the small (or glutamine) chain promotes the hydrolysis of glutamine to ammonia, which is used by the large (or ammonia) chain to synthesize carbamoyl phosphate. Tetramer of heterodimers (alpha,beta)4. Requires Mg(2+) as cofactor. It depends on Mn(2+) as a cofactor.

It catalyses the reaction hydrogencarbonate + L-glutamine + 2 ATP + H2O = carbamoyl phosphate + L-glutamate + 2 ADP + phosphate + 2 H(+). It carries out the reaction hydrogencarbonate + NH4(+) + 2 ATP = carbamoyl phosphate + 2 ADP + phosphate + 2 H(+). Its pathway is amino-acid biosynthesis; L-arginine biosynthesis; carbamoyl phosphate from bicarbonate: step 1/1. The protein operates within pyrimidine metabolism; UMP biosynthesis via de novo pathway; (S)-dihydroorotate from bicarbonate: step 1/3. Its function is as follows. Large subunit of the glutamine-dependent carbamoyl phosphate synthetase (CPSase). CPSase catalyzes the formation of carbamoyl phosphate from the ammonia moiety of glutamine, carbonate, and phosphate donated by ATP, constituting the first step of 2 biosynthetic pathways, one leading to arginine and/or urea and the other to pyrimidine nucleotides. The large subunit (synthetase) binds the substrates ammonia (free or transferred from glutamine from the small subunit), hydrogencarbonate and ATP and carries out an ATP-coupled ligase reaction, activating hydrogencarbonate by forming carboxy phosphate which reacts with ammonia to form carbamoyl phosphate. The polypeptide is Carbamoyl phosphate synthase large chain (Renibacterium salmoninarum (strain ATCC 33209 / DSM 20767 / JCM 11484 / NBRC 15589 / NCIMB 2235)).